Reading from the N-terminus, the 193-residue chain is Peptidyl-tRNA hydrolase (193 aa).

Tyrosine 15 lines the tRNA pocket. The Proton acceptor role is filled by histidine 20. Residues phenylalanine 65, asparagine 67, and asparagine 113 each coordinate tRNA.

This sequence belongs to the PTH family. As to quaternary structure, monomer.

It is found in the cytoplasm. It catalyses the reaction an N-acyl-L-alpha-aminoacyl-tRNA + H2O = an N-acyl-L-amino acid + a tRNA + H(+). Its function is as follows. Hydrolyzes ribosome-free peptidyl-tRNAs (with 1 or more amino acids incorporated), which drop off the ribosome during protein synthesis, or as a result of ribosome stalling. Functionally, catalyzes the release of premature peptidyl moieties from peptidyl-tRNA molecules trapped in stalled 50S ribosomal subunits, and thus maintains levels of free tRNAs and 50S ribosomes. This is Peptidyl-tRNA hydrolase from Ehrlichia ruminantium (strain Gardel).